The following is a 452-amino-acid chain: MPSDGRECVSIHIGQAGAQIGNACWELYCIEHGLDEAGFLKEEEKNKKQQSLQAFFSESMNGKHVPRAIYVDLEPTVLDEIRNGVYGNLFHPDQIINGKEDAANNYARGHYTIGKELIDVVLDRIRKQTENCEGLQGFLVFHSFGGGTGSGFSSLLMERLSVEFGKKSKLEFSVYPAPQVSTSVVEPYNSILTTHTTLELSDCSFMVDNEAIYDLCRQKLHVERPSYSNLNRLIAQVVSSITASLRFDGALNVDLNEFQTNLVPYPRIHFPLATYAPVISADRAHHEPLSVQDITHMCFEKANQMVKCDPSAGKYMAVCLLYRGDVVPKDVNAAISSVKAKRGINFVDWCPTGFKVGINYQAPITVEGGDLAKVHRAVCMLSNTTAIAEAWARLDHKFDLMYSKRAFVHWFVGEGMEEGEFMEARDDLAALEKDYAEVSRDTADLEEENDEF.

8 residues coordinate GTP: glutamine 15, glutamate 74, serine 143, glycine 147, threonine 148, threonine 182, asparagine 209, and asparagine 231. Glutamate 74 is a binding site for Mg(2+). Glutamate 257 is an active-site residue.

The protein belongs to the tubulin family. Dimer of alpha and beta chains. A typical microtubule is a hollow water-filled tube with an outer diameter of 25 nm and an inner diameter of 15 nM. Alpha-beta heterodimers associate head-to-tail to form protofilaments running lengthwise along the microtubule wall with the beta-tubulin subunit facing the microtubule plus end conferring a structural polarity. Microtubules usually have 13 protofilaments but different protofilament numbers can be found in some organisms and specialized cells. The cofactor is Mg(2+).

Its subcellular location is the cytoplasm. The protein localises to the cytoskeleton. It carries out the reaction GTP + H2O = GDP + phosphate + H(+). Tubulin is the major constituent of microtubules, a cylinder consisting of laterally associated linear protofilaments composed of alpha- and beta-tubulin heterodimers. Microtubules grow by the addition of GTP-tubulin dimers to the microtubule end, where a stabilizing cap forms. Below the cap, tubulin dimers are in GDP-bound state, owing to GTPase activity of alpha-tubulin. The chain is Tubulin alpha-8 chain (tba-8) from Caenorhabditis elegans.